Reading from the N-terminus, the 385-residue chain is Phosphotransferase FrzJ (385 aa).

ATP contacts are provided by Asn38 and Lys59. Asp245 is an active-site residue.

It belongs to the methylthioribose kinase family. As to quaternary structure, monomer.

It catalyses the reaction (1S,3S,6S,7S,8S,9S)-6-[(4-methoxyphenyl)methyl]-3-(methylamino)-5-azatricyclo[6.3.1.0(1,5)]dodecane-7,9-diol + ATP = (-)-FR901483 + ADP + 2 H(+). It functions in the pathway secondary metabolite biosynthesis. Its function is as follows. Phosphotransferase; part of the gene cluster that mediates the biosynthesis of the alkaloid (-)-FR901483, a potent immunosuppressant that shows efficacy in animal models and a probable inhibitor of purine nucleotide biosynthesis by targeting phosphoribosylpyrophosphate amidotransferase (PPAT). FrzJ catalyzes the last step of the pathway by phosphorylating the C4'-OH of dephospho-(-)-FR901483 to produce (-)-FR901483. The biosynthesis of (-)-FR901483 starts with the condensation of two L-tyrosines to yield (S,S)-dityrosyl-piperazine. This process occurs in 3 steps with the non-canonical nonribosomal peptide synthetase FrzA catalyzing the reduction of L-tyrosine into L-tyrosinal, the spontaneous condensation of 2 L-tyrosinal units, and the subsequent reduction by the NmrA-like family domain-containing oxidoreductase FrzB. The cytochrome P450 monooxygenase FrzC then performs coupling between N10 and C1' to morph the piperazine into a 1,4-diazabicyclo[3.2.1]octane spiro-fused to a 2,5-cyclohexadienone. The dienone portion is further reduced to cyclohexanone by the flavin-dependent reductase FrzD. The methyltranserases (MTs) FrzE and FrzF are then involved in the methylation at the C10' amine and the C4 phenolic oxygen, respectively. The order of the two MTs appear to be interchangeable. Cleavage of the C9-N10' bond by the dioxygenase FrzG then leads to formation of a conjugated iminium. In addition to the oxidation of C9, an additional dehydrogenation between C7 and C8 can occur to give a likely shunt product. The next biosynthetic step is the intramolecular aldol condensation catalyzed by the newly identified aldolase FrzH to yield an aza-tricyclic product with the formation of a C9-C3' bond. The short-chain dehydrogenase/reductase FrzI then produces dephospho-(-)-FR901483 that is phosphorylated at C4'-OH into (-)-FR901483 by the phosphotransferase FrzJ. The sequence is that of Phosphotransferase FrzJ from Cladobotryum sp.